Here is a 111-residue protein sequence, read N- to C-terminus: Large ribosomal subunit protein uL22 (111 aa).

The protein belongs to the universal ribosomal protein uL22 family. Part of the 50S ribosomal subunit.

In terms of biological role, this protein binds specifically to 23S rRNA; its binding is stimulated by other ribosomal proteins, e.g. L4, L17, and L20. It is important during the early stages of 50S assembly. It makes multiple contacts with different domains of the 23S rRNA in the assembled 50S subunit and ribosome. The globular domain of the protein is located near the polypeptide exit tunnel on the outside of the subunit, while an extended beta-hairpin is found that lines the wall of the exit tunnel in the center of the 70S ribosome. This chain is Large ribosomal subunit protein uL22, found in Acidithiobacillus ferrooxidans (strain ATCC 23270 / DSM 14882 / CIP 104768 / NCIMB 8455) (Ferrobacillus ferrooxidans (strain ATCC 23270)).